We begin with the raw amino-acid sequence, 302 residues long: Acetaldehyde dehydrogenase 2 (302 aa).

Catalysis depends on C130, which acts as the Acyl-thioester intermediate. NAD(+) contacts are provided by residues 161–169 and N272; that span reads SVGPGTRRN.

Belongs to the acetaldehyde dehydrogenase family.

The enzyme catalyses acetaldehyde + NAD(+) + CoA = acetyl-CoA + NADH + H(+). This chain is Acetaldehyde dehydrogenase 2, found in Cupriavidus necator (strain ATCC 17699 / DSM 428 / KCTC 22496 / NCIMB 10442 / H16 / Stanier 337) (Ralstonia eutropha).